A 62-amino-acid polypeptide reads, in one-letter code: Large ribosomal subunit protein bL28 (62 aa).

Residues 1 to 26 (MARKCYVTGKSPKSGNNRSHALNKTK) are disordered. Positions 11 to 20 (SPKSGNNRSH) are enriched in polar residues.

Belongs to the bacterial ribosomal protein bL28 family.

The polypeptide is Large ribosomal subunit protein bL28 (Exiguobacterium sibiricum (strain DSM 17290 / CCUG 55495 / CIP 109462 / JCM 13490 / 255-15)).